Reading from the N-terminus, the 414-residue chain is Argininosuccinate synthase (414 aa).

Residues Ala15 to Ser23 and Ala42 contribute to the ATP site. Residues Tyr93 and Ser98 each coordinate L-citrulline. Residue Gly123 coordinates ATP. L-aspartate is bound by residues Thr125, Asn129, and Asp130. Asn129 contributes to the L-citrulline binding site. L-citrulline contacts are provided by Arg133, Ser182, Ser191, Glu267, and Tyr279.

The protein belongs to the argininosuccinate synthase family. Type 1 subfamily. Homotetramer.

It is found in the cytoplasm. The catalysed reaction is L-citrulline + L-aspartate + ATP = 2-(N(omega)-L-arginino)succinate + AMP + diphosphate + H(+). It participates in amino-acid biosynthesis; L-arginine biosynthesis; L-arginine from L-ornithine and carbamoyl phosphate: step 2/3. The polypeptide is Argininosuccinate synthase (Deinococcus geothermalis (strain DSM 11300 / CIP 105573 / AG-3a)).